The primary structure comprises 166 residues: Large ribosomal subunit protein uL10 (166 aa).

This sequence belongs to the universal ribosomal protein uL10 family. In terms of assembly, part of the ribosomal stalk of the 50S ribosomal subunit. The N-terminus interacts with L11 and the large rRNA to form the base of the stalk. The C-terminus forms an elongated spine to which L12 dimers bind in a sequential fashion forming a multimeric L10(L12)X complex.

Its function is as follows. Forms part of the ribosomal stalk, playing a central role in the interaction of the ribosome with GTP-bound translation factors. This is Large ribosomal subunit protein uL10 from Bacillus cereus (strain ATCC 14579 / DSM 31 / CCUG 7414 / JCM 2152 / NBRC 15305 / NCIMB 9373 / NCTC 2599 / NRRL B-3711).